A 1414-amino-acid polypeptide reads, in one-letter code: Alpha-(1-&gt;3)-arabinofuranosyltransferase (1414 aa).

9 helical membrane-spanning segments follow: residues 57–77 (YLFP…PGWV), 81–101 (LWWA…AEAL), 128–148 (AISS…PVIL), 167–187 (VALM…AAVI), 203–223 (AWWL…LLML), 273–293 (STTA…GLAL), 302–322 (LITM…GGLG), 352–372 (LPLA…GSAP), and 389–409 (VAVA…AWTA). Residues 687 to 845 (YPSDGADLVY…QYDASGFAHP (159 aa)) enclose the F5/8 type C domain. Transmembrane regions (helical) follow at residues 1253–1273 (VGLI…LIPV), 1297–1317 (ALVA…GAAM), 1333–1353 (VWDN…GSVL), and 1364–1384 (YVGH…FLAA). Residues 1393–1414 (PEPSEDGRSAKPEHTGASAHAG) are disordered. The span at 1394–1406 (EPSEDGRSAKPEH) shows a compositional bias: basic and acidic residues.

The protein localises to the membrane. The catalysed reaction is Adds an alpha-D-arabinofuranosyl group from trans,octacis-decaprenylphospho-beta-D-arabinofuranose at the 3-O-position of an alpha-(1-&gt;5)-arabinofuranan chain attached to a beta-(1-&gt;5)-galactofuranan chain.. It functions in the pathway cell wall biogenesis; cell wall polysaccharide biosynthesis. Involved in the biosynthesis of the arabinogalactan (AG) region of the mycolylarabinogalactan-peptidoglycan (mAGP) complex, an essential component of the mycobacterial cell wall. Catalyzes the addition of an arabinofuranosyl (Araf) residue from the sugar donor decaprenyl-phospho-arabinose (DPA) on the C-3 of an alpha-(1-&gt;5)-linked Araf from the arabinan backbone of AG. The chain is Alpha-(1-&gt;3)-arabinofuranosyltransferase (aftD) from Mycolicibacterium smegmatis (strain ATCC 700084 / mc(2)155) (Mycobacterium smegmatis).